The sequence spans 281 residues: 2,3,4,5-tetrahydropyridine-2,6-dicarboxylate N-succinyltransferase (281 aa).

It belongs to the transferase hexapeptide repeat family.

The protein resides in the cytoplasm. The catalysed reaction is (S)-2,3,4,5-tetrahydrodipicolinate + succinyl-CoA + H2O = (S)-2-succinylamino-6-oxoheptanedioate + CoA. The protein operates within amino-acid biosynthesis; L-lysine biosynthesis via DAP pathway; LL-2,6-diaminopimelate from (S)-tetrahydrodipicolinate (succinylase route): step 1/3. The chain is 2,3,4,5-tetrahydropyridine-2,6-dicarboxylate N-succinyltransferase from Methylobacterium sp. (strain 4-46).